Consider the following 310-residue polypeptide: ATP-dependent protease (310 aa).

The region spanning 24-186 is the Integrase catalytic domain; the sequence is RLNQCFFKFK…TPNQKEENYF (163 aa).

The protein is ATP-dependent protease of Lactococcus lactis subsp. lactis (Streptococcus lactis).